The chain runs to 284 residues: L-ribulose-5-phosphate 3-epimerase UlaE (284 aa).

The protein belongs to the L-ribulose-5-phosphate 3-epimerase family.

The enzyme catalyses L-ribulose 5-phosphate = L-xylulose 5-phosphate. The protein operates within cofactor degradation; L-ascorbate degradation; D-xylulose 5-phosphate from L-ascorbate: step 3/4. Catalyzes the isomerization of L-xylulose-5-phosphate to L-ribulose-5-phosphate. Is involved in the anaerobic L-ascorbate utilization. The chain is L-ribulose-5-phosphate 3-epimerase UlaE from Shigella boydii serotype 18 (strain CDC 3083-94 / BS512).